A 216-amino-acid polypeptide reads, in one-letter code: MSSEPFKNVYLLPQTNQLLGLYTIIRNKNTTRPDFIFYSDRIIRLLVEEGLNHLPVQKQIVETDTNENFEGVSFMGKICGVSIVRAGESMEQGLRDCCRSVRIGKILIQRDEETALPKLFYEKLPEDISERYVFLLDPMLATGGSAIMATEVLIKRGVKPERIYFLNLICSKEGIEKYHAAFPEVRIVTGALDRGLDENKYLVPGLGDFGDRYYCV.

GTP is bound by residues R32, R41, 75-78 (MGKI), and K77. The residue at position 82 (S82) is a Phosphoserine. R85 provides a ligand contact to 5-phospho-alpha-D-ribose 1-diphosphate. R102 provides a ligand contact to GTP. Residue R110 coordinates 5-phospho-alpha-D-ribose 1-diphosphate. R131 is a GTP binding site. Residues D137 and 137–145 (DPMLATGGS) each bind 5-phospho-alpha-D-ribose 1-diphosphate. D-ribose 5-phosphate is bound at residue Y201. Residues L202 and 207-209 (GDF) each bind uracil. D208 is a 5-phospho-alpha-D-ribose 1-diphosphate binding site.

It belongs to the UPRTase family. Requires Mg(2+) as cofactor.

It carries out the reaction UMP + diphosphate = 5-phospho-alpha-D-ribose 1-diphosphate + uracil. It functions in the pathway pyrimidine metabolism; UMP biosynthesis via salvage pathway; UMP from uracil: step 1/1. Its activity is regulated as follows. Allosterically activated by GTP. In terms of biological role, catalyzes the conversion of uracil and 5-phospho-alpha-D-ribose 1-diphosphate (PRPP) to UMP and diphosphate in the pyrimidine salvage pathway. The polypeptide is Uracil phosphoribosyltransferase (FUR1) (Saccharomyces cerevisiae (strain ATCC 204508 / S288c) (Baker's yeast)).